Here is a 642-residue protein sequence, read N- to C-terminus: Fimbrin (642 aa).

2 EF-hand domains span residues 16–50 (EDLFSTIEKFRAIDLDDKGWVEKQQALEAVSKDGD) and 51–86 (ATYDEARETLKHVGVDASGRVELDDYVGLVAKLRES). Positions 29, 31, 35, 66, 68, 70, and 75 each coordinate Ca(2+). 2 actin-binding regions span residues 125–394 (IVAG…GLEP) and 395–642 (IQEE…TLNK). Calponin-homology (CH) domains are found at residues 139–259 (EEER…RRGL), 287–390 (LPPE…NTHP), 411–521 (EREA…RRNI), and 534–642 (DMSD…TLNK).

In terms of biological role, binds to actin, and functionally associates with actin structures involved in the development and maintenance of cell polarity. This Saccharomyces cerevisiae (strain ATCC 204508 / S288c) (Baker's yeast) protein is Fimbrin (SAC6).